Consider the following 719-residue polypeptide: DNA ligase (719 aa).

Residues 42-46 (DAEYD), 91-92 (SL), and Glu-125 each bind NAD(+). The active-site N6-AMP-lysine intermediate is the Lys-127. NAD(+) contacts are provided by Arg-148, Glu-184, Lys-300, and Lys-324. Residues Cys-429, Cys-432, Cys-447, and Cys-453 each contribute to the Zn(2+) site. Residues 638 to 719 (TASSPIAGKT…WLQLIEGSYI (82 aa)) enclose the BRCT domain.

The protein belongs to the NAD-dependent DNA ligase family. LigA subfamily. Requires Mg(2+) as cofactor. The cofactor is Mn(2+).

The enzyme catalyses NAD(+) + (deoxyribonucleotide)n-3'-hydroxyl + 5'-phospho-(deoxyribonucleotide)m = (deoxyribonucleotide)n+m + AMP + beta-nicotinamide D-nucleotide.. Its function is as follows. DNA ligase that catalyzes the formation of phosphodiester linkages between 5'-phosphoryl and 3'-hydroxyl groups in double-stranded DNA using NAD as a coenzyme and as the energy source for the reaction. It is essential for DNA replication and repair of damaged DNA. The sequence is that of DNA ligase from Bartonella quintana (strain Toulouse) (Rochalimaea quintana).